A 424-amino-acid chain; its full sequence is Solute carrier family 67 member A1 (424 aa).

A run of 10 helical transmembrane segments spans residues 26–46, 59–79, 90–110, 156–176, 184–204, 243–263, 276–296, 312–332, 334–354, and 391–411; these read ILLT…QFSI, IAFG…GPVF, AALT…AAAS, LGLC…TLVS, AILA…CIPA, IFLV…MFSI, AGYL…LVIG, VLVF…FHFC, LVPG…SMLI, and FGVP…LLVL.

It belongs to the major facilitator (TC 2.A.1) superfamily. Organic cation transporter (TC 2.A.1.19) family. Interacts with RNF167. As to expression, expressed at high levels in adult and fetal kidney and liver, and adult colon. Expressed in fetal renal proximal tubules (at protein level). Expressed at lower levels in heart, brain and lung.

It localises to the apical cell membrane. May act as a transporter of organic cations based on a proton efflux antiport mechanism. May play a role in the transport of chloroquine and quinidine-related compounds in kidney. Plays a role in the regulation of lipid metabolism. The chain is Solute carrier family 67 member A1 from Homo sapiens (Human).